Consider the following 77-residue polypeptide: MSNIEERVRNIIVEQLGVQLEEVKNEASFVDDLGADSLDTVELVMALEEEFDTEIPDEEAEKITTVQSAIDYVVNNG.

In terms of domain architecture, Carrier spans 2 to 77 (SNIEERVRNI…SAIDYVVNNG (76 aa)). An O-(pantetheine 4'-phosphoryl)serine modification is found at Ser37.

The protein belongs to the acyl carrier protein (ACP) family. In terms of processing, 4'-phosphopantetheine is transferred from CoA to a specific serine of apo-ACP by AcpS. This modification is essential for activity because fatty acids are bound in thioester linkage to the sulfhydryl of the prosthetic group.

The protein localises to the cytoplasm. Its pathway is lipid metabolism; fatty acid biosynthesis. In terms of biological role, carrier of the growing fatty acid chain in fatty acid biosynthesis. The sequence is that of Acyl carrier protein from Psychromonas ingrahamii (strain DSM 17664 / CCUG 51855 / 37).